A 943-amino-acid chain; its full sequence is Valine--tRNA ligase (943 aa).

The 'HIGH' region motif lies at 45–55 (PNVTGTLHMGH). Positions 541–545 (KMSKS) match the 'KMSKS' region motif. Lys-544 contacts ATP. A coiled-coil region spans residues 875–934 (IDVAAERIRLAKEIEKLEKQISIAQGKLANEGFVARAPAAVIDQEKQRVADFTATLEQLK).

The protein belongs to the class-I aminoacyl-tRNA synthetase family. ValS type 1 subfamily. Monomer.

The protein localises to the cytoplasm. It carries out the reaction tRNA(Val) + L-valine + ATP = L-valyl-tRNA(Val) + AMP + diphosphate. Catalyzes the attachment of valine to tRNA(Val). As ValRS can inadvertently accommodate and process structurally similar amino acids such as threonine, to avoid such errors, it has a 'posttransfer' editing activity that hydrolyzes mischarged Thr-tRNA(Val) in a tRNA-dependent manner. In Dechloromonas aromatica (strain RCB), this protein is Valine--tRNA ligase.